A 133-amino-acid polypeptide reads, in one-letter code: Small ribosomal subunit protein uS8 (133 aa).

This sequence belongs to the universal ribosomal protein uS8 family. In terms of assembly, part of the 30S ribosomal subunit. Contacts proteins S5 and S12.

In terms of biological role, one of the primary rRNA binding proteins, it binds directly to 16S rRNA central domain where it helps coordinate assembly of the platform of the 30S subunit. This chain is Small ribosomal subunit protein uS8, found in Chlorobaculum parvum (strain DSM 263 / NCIMB 8327) (Chlorobium vibrioforme subsp. thiosulfatophilum).